A 258-amino-acid chain; its full sequence is Imidazole glycerol phosphate synthase subunit HisF (258 aa).

Active-site residues include D11 and D130.

This sequence belongs to the HisA/HisF family. As to quaternary structure, heterodimer of HisH and HisF.

It localises to the cytoplasm. It catalyses the reaction 5-[(5-phospho-1-deoxy-D-ribulos-1-ylimino)methylamino]-1-(5-phospho-beta-D-ribosyl)imidazole-4-carboxamide + L-glutamine = D-erythro-1-(imidazol-4-yl)glycerol 3-phosphate + 5-amino-1-(5-phospho-beta-D-ribosyl)imidazole-4-carboxamide + L-glutamate + H(+). It functions in the pathway amino-acid biosynthesis; L-histidine biosynthesis; L-histidine from 5-phospho-alpha-D-ribose 1-diphosphate: step 5/9. IGPS catalyzes the conversion of PRFAR and glutamine to IGP, AICAR and glutamate. The HisF subunit catalyzes the cyclization activity that produces IGP and AICAR from PRFAR using the ammonia provided by the HisH subunit. This Escherichia coli (strain ATCC 8739 / DSM 1576 / NBRC 3972 / NCIMB 8545 / WDCM 00012 / Crooks) protein is Imidazole glycerol phosphate synthase subunit HisF.